A 207-amino-acid chain; its full sequence is MLSLTAESCELFNIPFYQFAQMKKFCPEDIPAIKADYKLHWDNWKAIIQSVSAQLGTPFAKPHIESWTNGWQVRAHFFAYFKYEFNQNSAAIFSVLLNRRRLRVCLDWHCYRADRSQINVQQYNQWLDQFDFKQFADFEIWREDESEYDDFRQVKVISEKNLILRSDEDFWCIGKSIEKAELNQIDPVLFITHTIQQLQPLYDRCHQ.

This is an uncharacterized protein from Haemophilus influenzae (strain ATCC 51907 / DSM 11121 / KW20 / Rd).